A 541-amino-acid polypeptide reads, in one-letter code: Calcium-dependent protein kinase 25 (541 aa).

Residues 1–11 (MGQCCTGGGKA) are compositionally biased toward gly residues. Residues 1-74 (MGQCCTGGGK…AGPIGEVLER (74 aa)) are disordered. Residue G2 is the site of N-myristoyl glycine attachment. The span at 38-67 (AKQQPCSPAAKAAATEAAAAASSSKKPAGP) shows a compositional bias: low complexity. Residues 83 to 341 (YSIGKELGRG…AFQVLNHPWI (259 aa)) enclose the Protein kinase domain. Residues 89–97 (LGRGQFGVT) and K112 each bind ATP. D207 functions as the Proton acceptor in the catalytic mechanism. The interval 347–377 (APDVPLDNVVLNRLKQFRAMNQFKKAALRII) is autoinhibitory domain. EF-hand domains follow at residues 384 to 419 (EEIKGLKEMFKNIDKDNSGTITLEELKNGLAKQGTK), 420 to 455 (FSDNEIEQLMEAADADGNGIIDYEEFVTATVHMNKM), 456 to 491 (DREEHLYTAFQYFDKDNSGYITKEELEQALKEQGLY), and 493 to 526 (ANEIKDVITDADSNNDGRIDYSEFVAMMRKGSGC). Ca(2+) contacts are provided by D397, D399, S401, T403, E408, D433, D435, N437, E444, D469, D471, S473, Y475, E480, D504, N506, D508, R510, and E515.

This sequence belongs to the protein kinase superfamily. Ser/Thr protein kinase family. CDPK subfamily. In terms of tissue distribution, specifically expressed in heading panicles, spikelets and mature pollen grains. Not expressed in vegetative tissues.

It is found in the membrane. The catalysed reaction is L-seryl-[protein] + ATP = O-phospho-L-seryl-[protein] + ADP + H(+). It carries out the reaction L-threonyl-[protein] + ATP = O-phospho-L-threonyl-[protein] + ADP + H(+). Its activity is regulated as follows. Activated by calcium. Autophosphorylation may play an important role in the regulation of the kinase activity. Its function is as follows. May play a role in signal transduction pathways that involve calcium as a second messenger. In Oryza sativa subsp. japonica (Rice), this protein is Calcium-dependent protein kinase 25.